Reading from the N-terminus, the 636-residue chain is 1-deoxy-D-xylulose-5-phosphate synthase (636 aa).

Thiamine diphosphate is bound by residues histidine 72 and glycine 113 to alanine 115. Aspartate 144 lines the Mg(2+) pocket. Residues glycine 145–alanine 146, asparagine 174, tyrosine 287, and glutamate 370 contribute to the thiamine diphosphate site. Position 174 (asparagine 174) interacts with Mg(2+).

This sequence belongs to the transketolase family. DXPS subfamily. Homodimer. It depends on Mg(2+) as a cofactor. Thiamine diphosphate serves as cofactor.

The enzyme catalyses D-glyceraldehyde 3-phosphate + pyruvate + H(+) = 1-deoxy-D-xylulose 5-phosphate + CO2. Its pathway is metabolic intermediate biosynthesis; 1-deoxy-D-xylulose 5-phosphate biosynthesis; 1-deoxy-D-xylulose 5-phosphate from D-glyceraldehyde 3-phosphate and pyruvate: step 1/1. Its function is as follows. Catalyzes the acyloin condensation reaction between C atoms 2 and 3 of pyruvate and glyceraldehyde 3-phosphate to yield 1-deoxy-D-xylulose-5-phosphate (DXP). This is 1-deoxy-D-xylulose-5-phosphate synthase from Microcystis aeruginosa (strain NIES-843 / IAM M-2473).